The sequence spans 412 residues: Multifunctional CCA protein (412 aa).

Residues Gly8 and Arg11 each contribute to the ATP site. Residues Gly8 and Arg11 each contribute to the CTP site. Mg(2+) is bound by residues Asp21 and Asp23. The ATP site is built by Arg91, Arg138, and Arg141. CTP is bound by residues Arg91, Arg138, and Arg141. The HD domain maps to 229–334 (RGQHTLLALQ…LELFNQLDVW (106 aa)).

Belongs to the tRNA nucleotidyltransferase/poly(A) polymerase family. Bacterial CCA-adding enzyme type 1 subfamily. Monomer. Can also form homodimers and oligomers. Requires Mg(2+) as cofactor. The cofactor is Ni(2+).

It catalyses the reaction a tRNA precursor + 2 CTP + ATP = a tRNA with a 3' CCA end + 3 diphosphate. The enzyme catalyses a tRNA with a 3' CCA end + 2 CTP + ATP = a tRNA with a 3' CCACCA end + 3 diphosphate. Functionally, catalyzes the addition and repair of the essential 3'-terminal CCA sequence in tRNAs without using a nucleic acid template. Adds these three nucleotides in the order of C, C, and A to the tRNA nucleotide-73, using CTP and ATP as substrates and producing inorganic pyrophosphate. tRNA 3'-terminal CCA addition is required both for tRNA processing and repair. Also involved in tRNA surveillance by mediating tandem CCA addition to generate a CCACCA at the 3' terminus of unstable tRNAs. While stable tRNAs receive only 3'-terminal CCA, unstable tRNAs are marked with CCACCA and rapidly degraded. This chain is Multifunctional CCA protein, found in Haemophilus ducreyi (strain 35000HP / ATCC 700724).